The chain runs to 66 residues: uncharacterized protein (66 aa).

The N-terminal stretch at 1–25 (MIVIILLFISIIVFLSVIQPQPSKN) is a signal peptide. The span at 21-31 (QPSKNKSRQQA) shows a compositional bias: polar residues. A disordered region spans residues 21–66 (QPSKNKSRQQADSGYFGYSDHSSHHDGCSSDGGFSDSGCGGGGGGD).

This is an uncharacterized protein from Bacillus subtilis (strain 168).